The sequence spans 315 residues: Calumenin (315 aa).

The signal sequence occupies residues 1 to 19 (MDTRRLLLCLCLWVACVVS). EF-hand domains follow at residues 68 to 103 (ESKE…AQKK), 104 to 139 (YVYD…TYLD), 151 to 186 (QMMV…EEFD), 188 to 223 (MKDI…HDGD), 229 to 264 (WVKT…SDYD), and 265 to 300 (HAEA…FVGS). The Ca(2+) site is built by D81, D83, D85, Y87, E92, D117, N119, D121, and E128. Residue N131 is glycosylated (N-linked (GlcNAc...) asparagine). Residues D164, D166, D168, E175, D201, N203, D205, E212, D242, N244, D246, K248, E253, D278, N280, D282, K284, and E289 each contribute to the Ca(2+) site. Positions 312–315 (HDEF) match the Prevents secretion from ER motif.

This sequence belongs to the CREC family. In terms of assembly, interacts with ggcx.

It localises to the endoplasmic reticulum membrane. Its subcellular location is the golgi apparatus. The protein resides in the secreted. It is found in the melanosome. The protein localises to the sarcoplasmic reticulum lumen. Functionally, involved in regulation of vitamin K-dependent carboxylation of multiple N-terminal glutamate residues. Seems to inhibit gamma-carboxylase ggcx. Binds 7 calcium ions with a low affinity. In Xenopus tropicalis (Western clawed frog), this protein is Calumenin (calu).